A 347-amino-acid chain; its full sequence is NADH-ubiquinone oxidoreductase chain 2 (347 aa).

Helical transmembrane passes span 1-21 (MNPM…SIVL), 25-45 (HWFL…PVLM), 68-88 (MILV…TIMI), 96-116 (MLIT…FWVP), 122-142 (VSLS…LSLL), 145-165 (IFPS…IMIG), 178-198 (IMAY…IYNP), 201-221 (SLLN…LLII), 239-259 (IVVS…PLTG), 274-294 (SSVM…FFYM), and 326-346 (MMSL…LITL).

The protein belongs to the complex I subunit 2 family. In terms of assembly, core subunit of respiratory chain NADH dehydrogenase (Complex I) which is composed of 45 different subunits. Interacts with TMEM242.

Its subcellular location is the mitochondrion inner membrane. The enzyme catalyses a ubiquinone + NADH + 5 H(+)(in) = a ubiquinol + NAD(+) + 4 H(+)(out). Its function is as follows. Core subunit of the mitochondrial membrane respiratory chain NADH dehydrogenase (Complex I) which catalyzes electron transfer from NADH through the respiratory chain, using ubiquinone as an electron acceptor. Essential for the catalytic activity and assembly of complex I. This chain is NADH-ubiquinone oxidoreductase chain 2, found in Sylvisorex lunaris (Moon forest shrew).